Here is a 565-residue protein sequence, read N- to C-terminus: Heme/hemopexin transporter protein HuxB (565 aa).

The first 26 residues, 1 to 26 (MKMRPRYSVIASAVSLGFVLSKSVMA), serve as a signal peptide directing secretion. A POTRA domain is found at 73-150 (FPLKQVQILD…GTVKILLLKG (78 aa)).

Belongs to the TPS (TC 1.B.20) family.

Its subcellular location is the cell outer membrane. In terms of biological role, likely functions in the release of soluble HxuA from the cell. Functionally, probable member of a two partner secretion pathway (TPS) in which it mediates the secretion of HuxA. In Haemophilus influenzae (strain ATCC 51907 / DSM 11121 / KW20 / Rd), this protein is Heme/hemopexin transporter protein HuxB (hxuB).